A 522-amino-acid polypeptide reads, in one-letter code: 4-chlorobenzoate--CoA ligase (522 aa).

ATP-binding positions include 161 to 169, 300 to 305, and asparagine 410; these read TSGTTGLPK and DIYGTT.

This sequence belongs to the ATP-dependent AMP-binding enzyme family. In terms of assembly, homodimer. It depends on Mg(2+) as a cofactor.

The enzyme catalyses 4-chlorobenzoate + ATP + CoA = 4-chlorobenzoyl-CoA + AMP + diphosphate. It participates in xenobiotic degradation; 4-chlorobenzoate degradation; 4-hydroxybenzoate from 4-chlorobenzoate: step 2/3. Catalyzes the formation of chlorobenzoyl-CoA via a 2 step reaction. First 4-chlorobenzoate is adenylated by ATP, followed by acyl transfer from the 4-chlorobenzoyl-AMP intermediate to CoA. Benzoate, 4-bromobenzoate, 4-iodobenzoate and 4-fluorobenzoate also act as substrates. Inactive towards 4-nitrobenzoate. The polypeptide is 4-chlorobenzoate--CoA ligase (Arthrobacter sp).